The chain runs to 312 residues: Protease HtpX homolog (312 aa).

2 consecutive transmembrane segments (helical) span residues 6–26 and 28–48; these read TAVL…AIGG and GGMM…YWYA. His-130 contributes to the Zn(2+) binding site. The active site involves Glu-131. A Zn(2+)-binding site is contributed by His-134. 2 helical membrane-spanning segments follow: residues 145–165 and 173–193; these read ITAS…FFGG and PFGG…AMVV. Zn(2+) is bound at residue Glu-202. Residues 287–297 show a composition bias toward low complexity; it reads PAPARAAPARG. The tract at residues 287–312 is disordered; that stretch reads PAPARAAPARGPWGGNTGGTRRGPWG. The span at 298-312 shows a compositional bias: gly residues; it reads PWGGNTGGTRRGPWG.

It belongs to the peptidase M48B family. Requires Zn(2+) as cofactor.

The protein localises to the cell inner membrane. This Azorhizobium caulinodans (strain ATCC 43989 / DSM 5975 / JCM 20966 / LMG 6465 / NBRC 14845 / NCIMB 13405 / ORS 571) protein is Protease HtpX homolog.